A 316-amino-acid polypeptide reads, in one-letter code: SWR complex protein 2 (316 aa).

Disordered stretches follow at residues 1-81, 93-127, and 153-180; these read MSAT…GEEV, KRKIQKNRAANLQRTLQPPKRPTPSAASEVPKKKY, and ETRLQEAKPRRKYTVSASANRQKGTMTQ. The segment covering 20–31 has biased composition (basic and acidic residues); it reads KMRELLEKEHLR. Residues 20–95 adopt a coiled-coil conformation; the sequence is KMRELLEKEH…RDEERIKKRK (76 aa). The span at 40–56 shows a compositional bias: acidic residues; the sequence is EKEDEEYNIEEEEEAER. Ser64 and Ser65 each carry phosphoserine. Residues 70 to 81 are compositionally biased toward basic and acidic residues; that stretch reads ELKKLEEEGEEV. The segment covering 167–180 has biased composition (polar residues); the sequence is VSASANRQKGTMTQ.

It belongs to the VPS72/YL1 family. Component of the SWR1 chromatin-remodeling complex.

It is found in the nucleus. Its function is as follows. Participates in the catalytic exchange of histone H2A for the H2A variant pht1, an euchromatin-specific factor, leading to chromatin remodeling and changes in transcription of targeted genes. The polypeptide is SWR complex protein 2 (swc2) (Schizosaccharomyces pombe (strain 972 / ATCC 24843) (Fission yeast)).